A 298-amino-acid chain; its full sequence is Aspartate carbamoyltransferase catalytic subunit (298 aa).

Arg-53 and Thr-54 together coordinate carbamoyl phosphate. Position 81 (Lys-81) interacts with L-aspartate. Positions 103, 132, and 135 each coordinate carbamoyl phosphate. Residues Arg-166 and Arg-218 each contribute to the L-aspartate site. Residues Gly-259 and Pro-260 each contribute to the carbamoyl phosphate site.

This sequence belongs to the aspartate/ornithine carbamoyltransferase superfamily. ATCase family. As to quaternary structure, heterododecamer (2C3:3R2) of six catalytic PyrB chains organized as two trimers (C3), and six regulatory PyrI chains organized as three dimers (R2).

The catalysed reaction is carbamoyl phosphate + L-aspartate = N-carbamoyl-L-aspartate + phosphate + H(+). Its pathway is pyrimidine metabolism; UMP biosynthesis via de novo pathway; (S)-dihydroorotate from bicarbonate: step 2/3. Catalyzes the condensation of carbamoyl phosphate and aspartate to form carbamoyl aspartate and inorganic phosphate, the committed step in the de novo pyrimidine nucleotide biosynthesis pathway. The polypeptide is Aspartate carbamoyltransferase catalytic subunit (Anaplasma marginale (strain St. Maries)).